The primary structure comprises 239 residues: MESPFYKKILLKLSGEALMGDQEFGISSDVIASYAKQIKEIVDLGVEVSIVIGGGNIFRGLSGAAQGVDRVTGDHMGMLATVINSLALQNSIEKLGVPTRVQTAIEMPKVAEPFIKRRAQRHLEKGRVVIFGAGTGNPYFTTDTAAALRAIEMETDVVIKATKVDGIYDKDPVKYPDAKKYQTVTYNEVLAKDLKVMDATAISLCRENKLPIIVFNSLDEGNLKKVVMGEHIGTTVVAD.

12–15 contacts ATP; the sequence is KLSG. Glycine 54 contacts UMP. ATP is bound by residues glycine 55 and arginine 59. Residues aspartate 74 and 135-142 each bind UMP; that span reads TGNPYFTT. The ATP site is built by threonine 162, tyrosine 168, and aspartate 171.

The protein belongs to the UMP kinase family. In terms of assembly, homohexamer.

It is found in the cytoplasm. It carries out the reaction UMP + ATP = UDP + ADP. The protein operates within pyrimidine metabolism; CTP biosynthesis via de novo pathway; UDP from UMP (UMPK route): step 1/1. With respect to regulation, inhibited by UTP. Functionally, catalyzes the reversible phosphorylation of UMP to UDP. This Fusobacterium nucleatum subsp. nucleatum (strain ATCC 25586 / DSM 15643 / BCRC 10681 / CIP 101130 / JCM 8532 / KCTC 2640 / LMG 13131 / VPI 4355) protein is Uridylate kinase.